Consider the following 447-residue polypeptide: Tubulin beta chain (447 aa).

Gln-11, Glu-69, Ser-138, Gly-142, Thr-143, Gly-144, Asn-204, and Asn-226 together coordinate GTP. Glu-69 contacts Mg(2+). Residues 424-447 (QYQEASVSEGEEEYDEEAPLEAEE) form a disordered region. Positions 432 to 447 (EGEEEYDEEAPLEAEE) are enriched in acidic residues.

Belongs to the tubulin family. Dimer of alpha and beta chains. A typical microtubule is a hollow water-filled tube with an outer diameter of 25 nm and an inner diameter of 15 nM. Alpha-beta heterodimers associate head-to-tail to form protofilaments running lengthwise along the microtubule wall with the beta-tubulin subunit facing the microtubule plus end conferring a structural polarity. Microtubules usually have 13 protofilaments but different protofilament numbers can be found in some organisms and specialized cells. Mg(2+) serves as cofactor.

It is found in the cytoplasm. Its subcellular location is the cytoskeleton. Functionally, tubulin is the major constituent of microtubules, a cylinder consisting of laterally associated linear protofilaments composed of alpha- and beta-tubulin heterodimers. Microtubules grow by the addition of GTP-tubulin dimers to the microtubule end, where a stabilizing cap forms. Below the cap, tubulin dimers are in GDP-bound state, owing to GTPase activity of alpha-tubulin. The polypeptide is Tubulin beta chain (TUB1) (Cochliobolus heterostrophus (Southern corn leaf blight fungus)).